The chain runs to 358 residues: MRVDLFDFDLPEERIALRPASPRDSARMLVVRPGKPLEDCIVRDLPQFLRPGDALVFNDTKVIPARLSGIRRRGETVAQIEATLHMRAGPDRWKAFLKPAKRVAVGERIQFGHDGESCFLGSLDATVAEKGEGGEALLVFDFSGPVLDEAIAAAGHVPLPPYIASKRPDDERDRADYQTIYAREEGAVAAPTAGLHFTPDLFSALDTIGVERHFVTLHVGAGTFLPVKAEDTEAHRMHAEWGEVDGMTADALNAVRARGGCIIAVGTTSLRLLESAAEPSGLLKAWSGETDIFITPGYRFRAIDILMTNFHLPRSTLFMLVSAFSGLETMKSAYSHAIDQGYRFYSYGDSSLLFREDT.

This sequence belongs to the QueA family. In terms of assembly, monomer.

It is found in the cytoplasm. The catalysed reaction is 7-aminomethyl-7-carbaguanosine(34) in tRNA + S-adenosyl-L-methionine = epoxyqueuosine(34) in tRNA + adenine + L-methionine + 2 H(+). Its pathway is tRNA modification; tRNA-queuosine biosynthesis. Functionally, transfers and isomerizes the ribose moiety from AdoMet to the 7-aminomethyl group of 7-deazaguanine (preQ1-tRNA) to give epoxyqueuosine (oQ-tRNA). The chain is S-adenosylmethionine:tRNA ribosyltransferase-isomerase from Chelativorans sp. (strain BNC1).